A 283-amino-acid polypeptide reads, in one-letter code: Glutamate racemase (283 aa).

Substrate is bound by residues Asp28 to Ser29 and Tyr60 to Gly61. The active-site Proton donor/acceptor is Cys92. Asn93–Thr94 contributes to the substrate binding site. Cys204 acts as the Proton donor/acceptor in catalysis. Thr205–His206 is a substrate binding site.

The protein belongs to the aspartate/glutamate racemases family.

The catalysed reaction is L-glutamate = D-glutamate. Its pathway is cell wall biogenesis; peptidoglycan biosynthesis. Functionally, provides the (R)-glutamate required for cell wall biosynthesis. The protein is Glutamate racemase of Salmonella enteritidis PT4 (strain P125109).